Here is a 155-residue protein sequence, read N- to C-terminus: Rusticyanin (155 aa).

A Plastocyanin-like domain is found at 53–155; sequence SFEVHDKKNP…TGMFGKIIVK (103 aa). The Cu cation site is built by His-85, Cys-138, His-143, and Met-148.

As to quaternary structure, monomer. The cofactor is Cu cation.

Its subcellular location is the periplasm. Electron carrier from cytochrome c552 to the A-type oxidase. The polypeptide is Rusticyanin (rus) (Acidithiobacillus ferrooxidans (Thiobacillus ferrooxidans)).